We begin with the raw amino-acid sequence, 406 residues long: Fosmidomycin resistance protein (406 aa).

The Periplasmic segment spans residues 1 to 42 (MAMSEQPQPVAGAAASTTKARTSFGILGAISLSHLLNDMIQS). Helical transmembrane passes span 43–63 (LILA…MQIG) and 64–84 (MITL…GYWT). Residues 85–102 (DKYPMPWSLPIGMCFTLS) lie on the Periplasmic side of the membrane. The chain crosses the membrane as a helical span at residues 103 to 123 (GLVLLALAGSFGAVLLAAALV). Residues 124–151 (GTGSSVFHPESSRVARMASGGRHGLAQS) lie on the Cytoplasmic side of the membrane. Residues 152-172 (IFQVGGNFGSSLGPLLAAVII) form a helical membrane-spanning segment. Topologically, residues 173–177 (APYGK) are periplasmic. Residues 178-198 (GNVAWFVLAALLAIVVLAQIS) form a helical membrane-spanning segment. Topologically, residues 199-225 (RWYSAQHRMNKGKPKATIINPLPRNKV) are cytoplasmic. The helical transmembrane segment at 226-246 (VLAVSILLILIFSKYFYMASI) threads the bilayer. The Periplasmic portion of the chain corresponds to 247–266 (SSYYTFYLMQKFGLSIQNAQ). A helical membrane pass occupies residues 267-287 (LHLFAFLFAVAAGTVIGGPVG). At 288–294 (DKIGRKY) the chain is on the cytoplasmic side. A helical membrane pass occupies residues 295 to 315 (VIWGSILGVAPFTLILPYASL). Residues 316-319 (HWTG) are Periplasmic-facing. A helical transmembrane segment spans residues 320-340 (VLTVIIGFILASAFSAILVYA). At 341–353 (QELLPGRIGMVSG) the chain is on the cytoplasmic side. Residues 354-374 (LFFGFAFGMGGLGAAVLGLIA) form a helical membrane-spanning segment. The Periplasmic portion of the chain corresponds to 375–378 (DHTS). Residues 379-399 (IELVYKICAFLPLLGMLTIFL) traverse the membrane as a helical segment. At 400 to 406 (PDNRHKD) the chain is on the cytoplasmic side.

Belongs to the major facilitator superfamily.

It is found in the cell inner membrane. Its function is as follows. Confers the resistance against fosmidomycin. The polypeptide is Fosmidomycin resistance protein (fsr) (Escherichia coli (strain K12)).